The chain runs to 305 residues: UDP-3-O-acyl-N-acetylglucosamine deacetylase (305 aa).

Residues His-78, His-237, and Asp-241 each coordinate Zn(2+). His-264 serves as the catalytic Proton donor.

It belongs to the LpxC family. Zn(2+) is required as a cofactor.

It catalyses the reaction a UDP-3-O-[(3R)-3-hydroxyacyl]-N-acetyl-alpha-D-glucosamine + H2O = a UDP-3-O-[(3R)-3-hydroxyacyl]-alpha-D-glucosamine + acetate. Its pathway is glycolipid biosynthesis; lipid IV(A) biosynthesis; lipid IV(A) from (3R)-3-hydroxytetradecanoyl-[acyl-carrier-protein] and UDP-N-acetyl-alpha-D-glucosamine: step 2/6. Catalyzes the hydrolysis of UDP-3-O-myristoyl-N-acetylglucosamine to form UDP-3-O-myristoylglucosamine and acetate, the committed step in lipid A biosynthesis. The chain is UDP-3-O-acyl-N-acetylglucosamine deacetylase from Burkholderia thailandensis (strain ATCC 700388 / DSM 13276 / CCUG 48851 / CIP 106301 / E264).